Reading from the N-terminus, the 379-residue chain is Stimulator of interferon genes protein (379 aa).

Transmembrane regions (helical) follow at residues 18 to 38 (AKKAAFVLLSVCLVVLWDLGE) and 43 to 63 (ILQWLMLHLASLQLGLLFKGV). Residues C88 and C91 are each lipidated (S-palmitoyl cysteine). The next 2 helical transmembrane spans lie at 89–109 (LGCPIRCGTLLLLSCYFYTPF) and 114–134 (HLPFTWTLALLGLSQALSILL). The segment at 153 to 340 (LNVAQGMAWS…RHLKQEEKEE (188 aa)) is cyclic dinucleotide-binding domain (CBD). Residues S162, Y167, R238, and T263 each coordinate 2',3'-cGAMP. 3',3'-c-di-GMP contacts are provided by residues S162, Y167, 238–241 (RVYT), and T263. The 2',3'-cUAMP site is built by Y167, R238, and T263. Residues 338–363 (KEEVTVDSARTSVMPDPSMLPQGPEL) form a disordered region. The segment at 340–379 (EVTVDSARTSVMPDPSMLPQGPELLISSMDQPLPLRTDVF) is C-terminal tail (CTT). Position 355 is a phosphoserine (S355). A pLxIS motif motif is present at residues 363–366 (LLIS). Position 366 is a phosphoserine; by TBK1 (S366).

Belongs to the STING family. In terms of assembly, homodimer; forms a homodimer in absence of cyclic nucleotide (c-di-GMP or cGAMP). Homotetramer; in presence of cyclic nucleotide (c-di-GMP or cGAMP), forms tetramers and higher-order oligomers through side-by-side packing. Interacts (when phosphorylated) with IRF3; following activation and phosphorylation on the pLxIS motif by TBK1, recruits IRF3. Interacts with TBK1; when homodimer, leading to subsequent production of IFN-beta. Interacts (via transmembrane domain) with TMEM203. In terms of processing, phosphorylation by TBK1 leads to activation and production of IFN-beta. Following cyclic nucleotide (c-di-GMP or cGAMP)-binding, activation and translocation from the endoplasmic reticulum, STING1 is phosphorylated by TBK1 at Ser-366 in the pLxIS motif. The phosphorylated pLxIS motif constitutes an IRF3-binding motif, leading to recruitment of the transcription factor IRF3 to induce type-I interferons and other cytokines. In contrast, lacks phosphorylation site at position 358, leading to reduced production of type-I interferons and other cytokines.

It localises to the endoplasmic reticulum membrane. The protein resides in the cytoplasm. Its subcellular location is the perinuclear region. It is found in the endoplasmic reticulum-Golgi intermediate compartment membrane. The protein localises to the golgi apparatus membrane. It localises to the cytoplasmic vesicle. The protein resides in the autophagosome membrane. Its subcellular location is the mitochondrion outer membrane. It is found in the cell membrane. The enzyme catalyses H(+)(in) = H(+)(out). Functionally, facilitator of innate immune signaling that acts as a sensor of cytosolic DNA from bacteria and viruses and promotes low production of type I interferon (IFN-alpha and IFN-beta). Compared to other mammals, STING1-dependent type I interferon induction is strongly reduced in bats, suggesting that the cGAS-STING pathway promotes a limited inflammatory response. Innate immune response is triggered in response to non-CpG double-stranded DNA from viruses and bacteria delivered to the cytoplasm. Acts by binding cyclic dinucleotides: recognizes and binds cyclic di-GMP (c-di-GMP), a second messenger produced by bacteria, cyclic UMP-AMP (2',3'-cUAMP), and cyclic GMP-AMP (cGAMP), a messenger produced by CGAS in response to DNA virus in the cytosol. Upon binding to c-di-GMP, cUAMP or cGAMP, STING1 oligomerizes, translocates from the endoplasmic reticulum and is phosphorylated by TBK1 on the pLxIS motif, leading to recruitment and subsequent activation of the transcription factor IRF3 to induce expression of type I interferon and exert a potent anti-viral state. In addition to promote the production of type I interferons, plays a direct role in autophagy. Following cGAMP-binding, STING1 buds from the endoplasmic reticulum into COPII vesicles, which then form the endoplasmic reticulum-Golgi intermediate compartment (ERGIC). The ERGIC serves as the membrane source for WIPI2 recruitment and LC3 lipidation, leading to formation of autophagosomes that target cytosolic DNA or DNA viruses for degradation by the lysosome. Promotes autophagy by acting as a proton channel that directs proton efflux from the Golgi to facilitate MAP1LC3B/LC3B lipidation. The autophagy- and interferon-inducing activities can be uncoupled and autophagy induction is independent of TBK1 phosphorylation. The polypeptide is Stimulator of interferon genes protein (Pteronotus parnellii (Parnell's mustached bat)).